The sequence spans 909 residues: Yellow mounds protein A (909 aa).

An MIF4G domain is found at 7–283 (LNVVSRILNK…KNLFELKNNK (277 aa)). Disordered stretches follow at residues 178–232 (SMGG…NNNI), 415–439 (MESSSNNNNSNSQLQFSLSSSSGIK), 460–537 (INLP…SSAP), 627–689 (VPPV…SEAR), and 704–774 (SLSG…AKKH). Over residues 204-215 (DDDDHDEEDNEN) the composition is skewed to acidic residues. 2 stretches are compositionally biased toward low complexity: residues 216 to 231 (NYENTTSTTNNINNNN) and 417 to 436 (SSSNNNNSNSQLQFSLSSSS). Polar residues predominate over residues 473 to 490 (RSNSPSLSSVVKQPQSQQ). Residues 491–525 (NNNNNNNNNNNNTTITTTTSSNNNINNNNNNNNNN) are compositionally biased toward low complexity. Residues 721-738 (STPTLKSTPAIVQNGGSI) show a composition bias toward polar residues. Positions 739 to 756 (TSTSSSSSSSSSSSSSTT) are enriched in low complexity. A coiled-coil region spans residues 845-877 (TMLFDLEEMAQEQQNLEKQNDQQQNLLTQNNQI).

Plays as essential role in regulating terminal differentiation. This Dictyostelium discoideum (Social amoeba) protein is Yellow mounds protein A (yelA).